Here is a 152-residue protein sequence, read N- to C-terminus: UPF0179 protein Mlab_1307 (152 aa).

The protein belongs to the UPF0179 family.

In Methanocorpusculum labreanum (strain ATCC 43576 / DSM 4855 / Z), this protein is UPF0179 protein Mlab_1307.